Consider the following 145-residue polypeptide: Pseudoazurin (145 aa).

Residues 1-22 (MFHHSLAAAAAALLALAAPGFA) form the signal peptide. Residues 27–115 (VHMLNKGESG…MGMVGLVQVG (89 aa)) form the Plastocyanin-like domain. Residues His62, Cys100, His103, and Met108 each coordinate Cu cation. The interval 126–145 (TAKMPKKARERMDAELAQVN) is disordered.

In terms of assembly, homodimer. Cu cation serves as cofactor.

The protein localises to the periplasm. Functionally, this soluble electron transfer copper protein is required for the inactivation of copper-containing nitrite reductase in the presence of oxygen. The chain is Pseudoazurin (pazS) from Paracoccus pantotrophus (Thiosphaera pantotropha).